A 362-amino-acid chain; its full sequence is N5-carboxyaminoimidazole ribonucleotide synthase (362 aa).

ATP contacts are provided by residues Arg-85, Lys-125, 130–136 (GYDGRGQ), 158–161 (EKFI), Glu-166, and 244–245 (NE). Residues 89 to 274 (KSLLDELNLS…QFELHLRALL (186 aa)) enclose the ATP-grasp domain.

The protein belongs to the PurK/PurT family. As to quaternary structure, homodimer.

It carries out the reaction 5-amino-1-(5-phospho-beta-D-ribosyl)imidazole + hydrogencarbonate + ATP = 5-carboxyamino-1-(5-phospho-D-ribosyl)imidazole + ADP + phosphate + 2 H(+). The protein operates within purine metabolism; IMP biosynthesis via de novo pathway; 5-amino-1-(5-phospho-D-ribosyl)imidazole-4-carboxylate from 5-amino-1-(5-phospho-D-ribosyl)imidazole (N5-CAIR route): step 1/2. Catalyzes the ATP-dependent conversion of 5-aminoimidazole ribonucleotide (AIR) and HCO(3)(-) to N5-carboxyaminoimidazole ribonucleotide (N5-CAIR). In Haemophilus influenzae (strain ATCC 51907 / DSM 11121 / KW20 / Rd), this protein is N5-carboxyaminoimidazole ribonucleotide synthase.